We begin with the raw amino-acid sequence, 935 residues long: Protein HIRA (935 aa).

WD repeat units lie at residues 14–58, 72–111, 131–170, 174–213, 222–261, 277–320, and 325–362; these read HDTG…DKKK, ESQS…NSMG, GHSM…DRIT, DIQL…CVKS, IEET…QTWK, RAMP…KPLF, and IFNH…IGEM. Residues 431–556 form a disordered region; sequence SSDIQLTKSM…RNKKRKVPAT (126 aa). Basic and acidic residues predominate over residues 439-468; that stretch reads SMEDNSKENESKNSEKTMMEERNKQIDVRK. Polar residues predominate over residues 480 to 492; that stretch reads GTTTADPMTSLSS. The span at 520-542 shows a compositional bias: acidic residues; sequence DLEDSSDSDDDDEEEEEDMEISD.

It belongs to the WD repeat HIR1 family.

It localises to the nucleus. Its function is as follows. Required for replication-independent chromatin assembly and for the periodic repression of histone gene transcription during the cell cycle. This chain is Protein HIRA, found in Caenorhabditis elegans.